The primary structure comprises 439 residues: GTPase Der (439 aa).

2 consecutive EngA-type G domains span residues 4 to 166 (PIVA…PAQD) and 175 to 350 (IRIA…EEAS). GTP-binding positions include 10-17 (GRPNVGKS), 57-61 (DTGGL), 119-122 (NKVE), 181-188 (GRPNVGKS), 228-232 (DTAGM), and 293-296 (NKWD). Positions 351–435 (KRVATADLNN…PIRFFLRKRE (85 aa)) constitute a KH-like domain.

It belongs to the TRAFAC class TrmE-Era-EngA-EngB-Septin-like GTPase superfamily. EngA (Der) GTPase family. Associates with the 50S ribosomal subunit.

In terms of biological role, GTPase that plays an essential role in the late steps of ribosome biogenesis. The protein is GTPase Der of Desulforamulus reducens (strain ATCC BAA-1160 / DSM 100696 / MI-1) (Desulfotomaculum reducens).